Consider the following 163-residue polypeptide: ATP synthase subunit b (163 aa).

The helical transmembrane segment at 10–29 (VFMQMFHFLLMLVVLRLFAY) threads the bilayer.

This sequence belongs to the ATPase B chain family. As to quaternary structure, F-type ATPases have 2 components, F(1) - the catalytic core - and F(0) - the membrane proton channel. F(1) has five subunits: alpha(3), beta(3), gamma(1), delta(1), epsilon(1). F(0) has three main subunits: a(1), b(2) and c(10-14). The alpha and beta chains form an alternating ring which encloses part of the gamma chain. F(1) is attached to F(0) by a central stalk formed by the gamma and epsilon chains, while a peripheral stalk is formed by the delta and b chains.

The protein localises to the cell membrane. Its function is as follows. F(1)F(0) ATP synthase produces ATP from ADP in the presence of a proton or sodium gradient. F-type ATPases consist of two structural domains, F(1) containing the extramembraneous catalytic core and F(0) containing the membrane proton channel, linked together by a central stalk and a peripheral stalk. During catalysis, ATP synthesis in the catalytic domain of F(1) is coupled via a rotary mechanism of the central stalk subunits to proton translocation. In terms of biological role, component of the F(0) channel, it forms part of the peripheral stalk, linking F(1) to F(0). In Desulforudis audaxviator (strain MP104C), this protein is ATP synthase subunit b.